Consider the following 1012-residue polypeptide: Tolloid-like protein 2 (1012 aa).

The first 21 residues, 1 to 21 (MPLATTLGTLVLLLLLPLPRG), serve as a signal peptide directing secretion. A propeptide spanning residues 22 to 146 (AEVTGDHSNV…AKTFSARVRR (125 aa)) is cleaved from the precursor. The interval 83–135 (KPSIDKPGHDTGGLEETSARWPNDTASNASIQAPRKDGKDATTFLPNPGTSNT) is disordered. Positions 126 to 135 (FLPNPGTSNT) are enriched in polar residues. The 201-residue stretch at 146 to 346 (RATTSRTERI…AQARKLYKCP (201 aa)) folds into the Peptidase M12A domain. N-linked (GlcNAc...) asparagine glycosylation occurs at Asn-168. Disulfide bonds link Cys-189–Cys-345, Cys-209–Cys-231, Cys-211–Cys-212, and Cys-348–Cys-374. His-239 lines the Zn(2+) pocket. The active site involves Glu-240. His-243 and His-249 together coordinate Zn(2+). CUB domains are found at residues 348–460 (CGET…YEAM) and 461–573 (CGGD…FFKE). Asn-358 and Asn-389 each carry an N-linked (GlcNAc...) asparagine glycan. 12 disulfides stabilise this stretch: Cys-401/Cys-423, Cys-461/Cys-487, Cys-514/Cys-536, Cys-577/Cys-589, Cys-585/Cys-598, Cys-600/Cys-613, Cys-617/Cys-643, Cys-670/Cys-692, Cys-733/Cys-744, Cys-740/Cys-753, Cys-755/Cys-768, and Cys-773/Cys-799. The region spanning 573–614 (EVDECSWPDHGGCEQRCVNTLGSYTCACDPGYELAADKKTCE) is the EGF-like 1; calcium-binding domain. Residues 617 to 729 (CGGFITKLNG…RGFRAHFFSD (113 aa)) form the CUB 3 domain. A glycan (N-linked (GlcNAc...) asparagine) is linked at Asn-625. An EGF-like 2; calcium-binding domain is found at 729 to 769 (DKDECAKDNGGCQQECVNTFGSYLCRCRNGYRLHENGHDCK). CUB domains lie at 773–885 (CAYK…HSTE) and 886–1002 (CGGR…YTST). An N-linked (GlcNAc...) asparagine glycan is attached at Asn-802. Disulfide bonds link Cys-826–Cys-848, Cys-886–Cys-916, and Cys-943–Cys-965. Omega-N-methylarginine is present on residues Arg-960 and Arg-963.

It depends on Zn(2+) as a cofactor.

It localises to the secreted. In terms of biological role, protease which specifically processes pro-lysyl oxidase. Required for the embryonic development. Predominant protease, which in the development, influences dorsal-ventral patterning and skeletogenesis. This Mus musculus (Mouse) protein is Tolloid-like protein 2 (Tll2).